Consider the following 449-residue polypeptide: Serine/threonine-protein phosphatase 2A activator 2 (449 aa).

Disordered stretches follow at residues 1 to 72 and 378 to 416; these read MDSS…DPST and MSEQ…PTGW. The span at 54 to 69 shows a compositional bias: pro residues; it reads NPTPVPETPALPPRPD. Positions 389 to 403 are enriched in acidic residues; sequence EENEEEGGEVEVYDD.

This sequence belongs to the PTPA-type PPIase family.

It is found in the cytoplasm. It carries out the reaction [protein]-peptidylproline (omega=180) = [protein]-peptidylproline (omega=0). Functionally, PPIases accelerate the folding of proteins. It catalyzes the cis-trans isomerization of proline imidic peptide bonds in oligopeptides. Acts as a regulatory subunit for PP2A-like phosphatases modulating their activity or substrate specificity, probably by inducing a conformational change in the catalytic subunit, a direct target of the PPIase. Can reactivate inactive phosphatase PP2A-phosphatase methylesterase complexes (PP2Ai) in presence of ATP and Mg(2+) by dissociating the inactive form from the complex. This Neurospora crassa (strain ATCC 24698 / 74-OR23-1A / CBS 708.71 / DSM 1257 / FGSC 987) protein is Serine/threonine-protein phosphatase 2A activator 2 (rrd-2).